Consider the following 137-residue polypeptide: Phosphoinositide-interacting protein (137 aa).

Helical transmembrane passes span Ile56–Ala76 and Pro94–Ile114.

As to quaternary structure, interacts with TRPV1.

Its subcellular location is the membrane. In terms of biological role, regulatory subunit of TRPV1, a molecular sensor of noxious heat and capsaicin. Positively regulates TRPV1 channel activity via phosphatidylinositol 4,5-bisphosphate (PIP2). Binds various phosphoinositide, including phosphatidylinositol 4,5-bisphosphate (PIP2), but not phosphatidylinositol (PI). The chain is Phosphoinositide-interacting protein (PIRT) from Homo sapiens (Human).